Here is a 551-residue protein sequence, read N- to C-terminus: Palmdelphin (551 aa).

M1 bears the N-acetylmethionine mark. The stretch at 12–106 (QAITDKRKIQ…LQISANEEAI (95 aa)) forms a coiled coil. A Glycyl lysine isopeptide (Lys-Gly) (interchain with G-Cter in SUMO2) cross-link involves residue K125. S135 carries the post-translational modification Phosphoserine. K178 is covalently cross-linked (Glycyl lysine isopeptide (Lys-Gly) (interchain with G-Cter in SUMO1); alternate). A Glycyl lysine isopeptide (Lys-Gly) (interchain with G-Cter in SUMO2); alternate cross-link involves residue K178. Over residues 247-258 (ERNSKSPTEYHE) the composition is skewed to basic and acidic residues. The segment at 247-266 (ERNSKSPTEYHEPVYANPFC) is disordered. T270 is modified (phosphothreonine). 2 disordered regions span residues 294 to 390 (LGNH…TCQE) and 451 to 533 (AEDN…GTED). Phosphoserine occurs at positions 321 and 349. The span at 341-353 (HTQQKRMASPWEE) shows a compositional bias: polar residues. Residues 354-365 (SSNRQNEHEVSP) show a composition bias toward basic and acidic residues. Residues S370, S375, S384, S385, S498, S515, and S520 each carry the phosphoserine modification.

The protein belongs to the paralemmin family. As to quaternary structure, interacts with GLUL. Post-translationally, phosphorylated. As to expression, ubiquitous. Expressed at highest levels in the heart and lung.

The protein resides in the cytoplasm. It localises to the cell projection. Its subcellular location is the dendrite. It is found in the dendritic spine. In Mus musculus (Mouse), this protein is Palmdelphin (Palmd).